A 342-amino-acid polypeptide reads, in one-letter code: Cyclin-dependent kinase-like 4 (342 aa).

The region spanning 4–286 (YEKLAKIGEG…CAQLLDSAYF (283 aa)) is the Protein kinase domain. Residues 10–18 (IGEGSYGVV) and Lys-33 each bind ATP. Positions 45-51 (RKIALRE) match the [NKR]KIAxRE motif. Residue Asp-126 is the Proton acceptor of the active site. The tract at residues 295-328 (KRKARSEGRSRRRQQNQLLPLIPGSHISPTPDGR) is disordered.

It belongs to the protein kinase superfamily. CMGC Ser/Thr protein kinase family. CDC2/CDKX subfamily.

The protein localises to the cytoplasm. It carries out the reaction L-seryl-[protein] + ATP = O-phospho-L-seryl-[protein] + ADP + H(+). The enzyme catalyses L-threonyl-[protein] + ATP = O-phospho-L-threonyl-[protein] + ADP + H(+). The sequence is that of Cyclin-dependent kinase-like 4 (Cdkl4) from Mus musculus (Mouse).